The following is a 463-amino-acid chain: Elongation factor 1-alpha (463 aa).

The tr-type G domain occupies 5–242 (KVHINIVVIG…DSIIPPQRPT (238 aa)). The G1 stretch occupies residues 14-21 (GHVDSGKS). 14-21 (GHVDSGKS) lines the GTP pocket. The interval 70-74 (GITID) is G2. The segment at 91-94 (DAPG) is G3. Residues 91–95 (DAPGH) and 153–156 (NKMD) contribute to the GTP site. A G4 region spans residues 153–156 (NKMD). Residues 194–196 (SGF) form a G5 region. 5-glutamyl glycerylphosphorylethanolamine occurs at positions 301 and 374. The disordered stretch occupies residues 443-463 (KSDGSSGKVTKSAQKAAPKKK). The span at 446-455 (GSSGKVTKSA) shows a compositional bias: polar residues.

This sequence belongs to the TRAFAC class translation factor GTPase superfamily. Classic translation factor GTPase family. EF-Tu/EF-1A subfamily.

Its subcellular location is the cytoplasm. This protein promotes the GTP-dependent binding of aminoacyl-tRNA to the A-site of ribosomes during protein biosynthesis. This chain is Elongation factor 1-alpha, found in Caenorhabditis elegans.